The following is a 194-amino-acid chain: Molybdenum cofactor guanylyltransferase (194 aa).

Residues 12-14 (LAG), Lys-25, Asn-53, Asp-70, and Asp-100 contribute to the GTP site. Residue Asp-100 participates in Mg(2+) binding.

This sequence belongs to the MobA family. Monomer. Mg(2+) serves as cofactor.

The protein resides in the cytoplasm. It carries out the reaction Mo-molybdopterin + GTP + H(+) = Mo-molybdopterin guanine dinucleotide + diphosphate. In terms of biological role, transfers a GMP moiety from GTP to Mo-molybdopterin (Mo-MPT) cofactor (Moco or molybdenum cofactor) to form Mo-molybdopterin guanine dinucleotide (Mo-MGD) cofactor. This is Molybdenum cofactor guanylyltransferase from Aliivibrio salmonicida (strain LFI1238) (Vibrio salmonicida (strain LFI1238)).